The sequence spans 259 residues: Carbonic anhydrase 1 (259 aa).

Ala1 bears the N-acetylalanine mark. The Alpha-carbonic anhydrase domain occupies 2–258 (HAWGYGPTDG…LKGRHVRASF (257 aa)). His63 acts as the Proton donor/acceptor in catalysis. His93, His95, and His118 together coordinate Zn(2+). Residues Thr197 and 197-198 (TT) contribute to the substrate site.

Belongs to the alpha-carbonic anhydrase family. Zn(2+) is required as a cofactor.

The protein resides in the cytoplasm. The enzyme catalyses hydrogencarbonate + H(+) = CO2 + H2O. In terms of biological role, catalyzes the reversible hydration of carbon dioxide. The protein is Carbonic anhydrase 1 (ca1) of Chionodraco hamatus (Antarctic teleost icefish).